We begin with the raw amino-acid sequence, 1482 residues long: Cystic fibrosis transmembrane conductance regulator (1482 aa).

The Cytoplasmic segment spans residues 1–77 (MQRSPLEKAN…KLINALRRCF (77 aa)). A helical transmembrane segment spans residues 78-98 (FWRFVFHGIILYLGEVTKAVQ). Positions 81-365 (FVFHGIILYL…WAVQTWYDSL (285 aa)) constitute an ABC transmembrane type-1 1 domain. Over 99 to 122 (PLLLGRIIASYDPDNKVERSIAIY) the chain is Extracellular. The chain crosses the membrane as a helical span at residues 123–146 (LGIGLCLLFIVRTLLLHPAIFGLH). Over 147-195 (HMGMQMRIALFSLIYKKTLKLSSRVLDKISTGQLISLLSNNLNKFDEGL) the chain is Cytoplasmic. Residues 196–216 (ALAHFVWIVPLQVVLLMGLLW) traverse the membrane as a helical segment. Residues 217–222 (DLLQAS) are Extracellular-facing. Residues 223–243 (AFCGLAFLIVLALFQAWLGQM) form a helical membrane-spanning segment. At 244–298 (MMKYRERRAGKINERLVITSEMIDNIQSVKAYCWEEAMEKMIENLRETELKLTRK) the chain is on the cytoplasmic side. The chain crosses the membrane as a helical span at residues 299 to 319 (TAYVRYFNSSAFFFSGFFVVF). Residues 320–339 (LAVLPYALIKGIILRKIFTT) lie on the Extracellular side of the membrane. A helical membrane pass occupies residues 340–358 (ISFCIVLRMAVTRQFPWAV). The Cytoplasmic portion of the chain corresponds to 359 to 859 (QTWYDSLGAI…YLRYITIHKN (501 aa)). Residues tryptophan 401, serine 434, 458–465 (GSTGAGKT), and glutamine 493 contribute to the ATP site. The 224-residue stretch at 423-646 (NGDNGLFFSN…RPDFSSKLMG (224 aa)) folds into the ABC transporter 1 domain. Cysteine 524 carries the S-palmitoyl cysteine lipid modification. Residues serine 549 and serine 660 each carry the phosphoserine modification. A disordered R region region spans residues 654 to 832 (SAERRSSILT…DEINEEDLKE (179 aa)). The residue at position 670 (serine 670) is a Phosphoserine; by PKA. Serine 686 bears the Phosphoserine mark. A Glycyl lysine isopeptide (Lys-Gly) (interchain with G-Cter in ubiquitin) cross-link involves residue lysine 688. Phosphoserine occurs at positions 700, 712, 737, 769, 796, and 814. The helical transmembrane segment at 860-880 (LVFVLIWCLVIFLVEVAASLV) threads the bilayer. In terms of domain architecture, ABC transmembrane type-1 2 spans 860–1156 (LVFVLIWCLV…AVNSSIDVDS (297 aa)). Over 881–919 (GLWLLEDISFKDKTNGTNGANNTFPVIITDTSKYYLFYI) the chain is Extracellular. N-linked (GlcNAc...) asparagine glycosylation is found at asparagine 895 and asparagine 901. The chain crosses the membrane as a discontinuously helical span at residues 920-940 (YVGIADTFFALGIFRGLPLVH). The Cytoplasmic segment spans residues 941 to 991 (TLISVSKILHHKMLYSVLKAPMSTFNTLKPGGILNRFSKDIAILDDLLPLT). Residues 992 to 1012 (IFDFIQLILIVVGALIVVSAI) traverse the membrane as a helical segment. Residues 1013–1014 (RP) are Extracellular-facing. A helical transmembrane segment spans residues 1015-1035 (YIFLATVPVIIAFIMLRAYFL). The Cytoplasmic segment spans residues 1036 to 1096 (QTSQQLKQLE…TASWFLYLST (61 aa)). Residues 1097 to 1117 (LRWFQMRIELVFVIFFIAVTF) form a helical membrane-spanning segment. At 1118–1131 (ISILTTGDGEGRVG) the chain is on the extracellular side. A helical transmembrane segment spans residues 1132 to 1152 (ILLTLAMNIMSTLQWAVNSSI). Residues 1153-1482 (DVDSLMRSVS…TEEEVQETRL (330 aa)) lie on the Cytoplasmic side of the membrane. The 234-residue stretch at 1212–1445 (MIVKDLTAKY…KSLYRQAISH (234 aa)) folds into the ABC transporter 2 domain. ATP contacts are provided by residues tyrosine 1221 and 1246-1253 (GRTGSGKS). Residues 1388-1482 (RVLKNAFANC…TEEEVQETRL (95 aa)) are interaction with GORASP2. A lipid anchor (S-palmitoyl cysteine) is attached at cysteine 1397. A phosphoserine mark is found at serine 1446 and serine 1458. The short motif at 1480-1482 (TRL) is the PDZ-binding element.

It belongs to the ABC transporter superfamily. ABCC family. CFTR transporter (TC 3.A.1.202) subfamily. In terms of assembly, monomer; does not require oligomerization for channel activity. May form oligomers in the membrane. Interacts with SLC26A3, SLC26A6 and NHERF1. Interacts with SHANK2. Interacts with MYO6. Interacts (via C-terminus) with GOPC (via PDZ domain); this promotes CFTR internalization and thereby decreases channel activity. Interacts with SLC4A7 through NHERF1. Found in a complex with MYO5B and RAB11A. Interacts with ANO1. Interacts with SLC26A8. Interacts with AHCYL1; the interaction increases CFTR activity. Interacts with CSE1L. The core-glycosylated form interacts with GORASP2 (via PDZ GRASP-type 1 domain) in respone to ER stress. Interacts with MARCHF2; the interaction leads to CFTR ubiqtuitination and degradation. Interacts with ADGRG2. Post-translationally, N-glycosylated. Phosphorylated; cAMP treatment promotes phosphorylation and activates the channel. Dephosphorylation decreases the ATPase activity (in vitro). Phosphorylation at PKA sites activates the channel. Phosphorylation at PKC sites enhances the response to phosphorylation by PKA. Phosphorylated by AMPK; this inhibits channel activity. In terms of processing, ubiquitinated, leading to its degradation in the lysosome. Deubiquitination by USP10 in early endosomes enhances its endocytic recycling to the cell membrane. Ubiquitinated by RNF185 during ER stress. Ubiquitinated by MARCHF2.

The protein localises to the apical cell membrane. It is found in the early endosome membrane. Its subcellular location is the cell membrane. It localises to the recycling endosome membrane. The protein resides in the endoplasmic reticulum membrane. The protein localises to the nucleus. The enzyme catalyses ATP + H2O + closed Cl(-) channel = ADP + phosphate + open Cl(-) channel.. The catalysed reaction is chloride(in) = chloride(out). It carries out the reaction hydrogencarbonate(in) = hydrogencarbonate(out). It catalyses the reaction ATP + H2O = ADP + phosphate + H(+). Epithelial ion channel that plays an important role in the regulation of epithelial ion and water transport and fluid homeostasis. Mediates the transport of chloride ions across the cell membrane. Possesses an intrinsic ATPase activity and utilizes ATP to gate its channel; the passive flow of anions through the channel is gated by cycles of ATP binding and hydrolysis by the ATP-binding domains. The ion channel is also permeable to HCO(3)(-); selectivity depends on the extracellular chloride concentration. Exerts its function also by modulating the activity of other ion channels and transporters. Contributes to the regulation of the pH and the ion content of the epithelial fluid layer. Modulates the activity of the epithelial sodium channel (ENaC) complex, in part by regulating the cell surface expression of the ENaC complex. May regulate bicarbonate secretion and salvage in epithelial cells by regulating the transporter SLC4A7. Can inhibit the chloride channel activity of ANO1. Plays a role in the chloride and bicarbonate homeostasis during sperm epididymal maturation and capacitation. This chain is Cystic fibrosis transmembrane conductance regulator, found in Didelphis virginiana (North American opossum).